We begin with the raw amino-acid sequence, 40 residues long: Beta-defensin 2 (40 aa).

3 disulfides stabilise this stretch: Cys-7/Cys-36, Cys-14/Cys-29, and Cys-19/Cys-37.

The protein belongs to the beta-defensin family. In terms of tissue distribution, neutrophilic granules.

It is found in the secreted. Has bactericidal activity. Active against E.coli ML35 and S.aureus 502A. The sequence is that of Beta-defensin 2 (DEFB2) from Bos taurus (Bovine).